The following is a 71-amino-acid chain: uncharacterized protein (71 aa).

This is an uncharacterized protein from Haemophilus influenzae (strain ATCC 51907 / DSM 11121 / KW20 / Rd).